The chain runs to 498 residues: Glycerol kinase (498 aa).

Residue Thr-12 coordinates ADP. ATP contacts are provided by Thr-12, Thr-13, and Ser-14. Thr-12 is a sn-glycerol 3-phosphate binding site. An ADP-binding site is contributed by Arg-16. Sn-glycerol 3-phosphate is bound by residues Arg-82, Glu-83, Tyr-134, and Asp-244. Glycerol contacts are provided by Arg-82, Glu-83, Tyr-134, Asp-244, and Gln-245. ADP-binding residues include Thr-266 and Gly-310. 4 residues coordinate ATP: Thr-266, Gly-310, Gln-314, and Gly-411. Gly-411 and Asn-415 together coordinate ADP.

Belongs to the FGGY kinase family.

It carries out the reaction glycerol + ATP = sn-glycerol 3-phosphate + ADP + H(+). Its pathway is polyol metabolism; glycerol degradation via glycerol kinase pathway; sn-glycerol 3-phosphate from glycerol: step 1/1. Its activity is regulated as follows. Inhibited by fructose 1,6-bisphosphate (FBP). In terms of biological role, key enzyme in the regulation of glycerol uptake and metabolism. Catalyzes the phosphorylation of glycerol to yield sn-glycerol 3-phosphate. The sequence is that of Glycerol kinase from Roseiflexus sp. (strain RS-1).